Consider the following 258-residue polypeptide: Trans-aconitate 2-methyltransferase (258 aa).

It belongs to the methyltransferase superfamily. Tam family.

It is found in the cytoplasm. It catalyses the reaction trans-aconitate + S-adenosyl-L-methionine = (E)-3-(methoxycarbonyl)pent-2-enedioate + S-adenosyl-L-homocysteine. Functionally, catalyzes the S-adenosylmethionine monomethyl esterification of trans-aconitate. This Acidovorax sp. (strain JS42) protein is Trans-aconitate 2-methyltransferase.